The sequence spans 283 residues: Thymidylate synthase (283 aa).

Arg22 contributes to the dUMP binding site. Residue Cys160 is the Nucleophile of the active site. Residues 180 to 183 (RSCD), Asn191, and 221 to 223 (HIY) each bind dUMP. Asp183 serves as a coordination point for (6R)-5,10-methylene-5,6,7,8-tetrahydrofolate. Ser282 is a (6R)-5,10-methylene-5,6,7,8-tetrahydrofolate binding site.

This sequence belongs to the thymidylate synthase family. Bacterial-type ThyA subfamily. In terms of assembly, homodimer.

Its subcellular location is the cytoplasm. The enzyme catalyses dUMP + (6R)-5,10-methylene-5,6,7,8-tetrahydrofolate = 7,8-dihydrofolate + dTMP. It functions in the pathway pyrimidine metabolism; dTTP biosynthesis. Functionally, catalyzes the reductive methylation of 2'-deoxyuridine-5'-monophosphate (dUMP) to 2'-deoxythymidine-5'-monophosphate (dTMP) while utilizing 5,10-methylenetetrahydrofolate (mTHF) as the methyl donor and reductant in the reaction, yielding dihydrofolate (DHF) as a by-product. This enzymatic reaction provides an intracellular de novo source of dTMP, an essential precursor for DNA biosynthesis. The polypeptide is Thymidylate synthase (Shewanella pealeana (strain ATCC 700345 / ANG-SQ1)).